Reading from the N-terminus, the 529-residue chain is Bifunctional purine biosynthesis protein PurH (529 aa).

Residues 1–148 enclose the MGS-like domain; sequence MQQRRPVRRA…KNHKDVAIVV (148 aa).

It belongs to the PurH family.

The enzyme catalyses (6R)-10-formyltetrahydrofolate + 5-amino-1-(5-phospho-beta-D-ribosyl)imidazole-4-carboxamide = 5-formamido-1-(5-phospho-D-ribosyl)imidazole-4-carboxamide + (6S)-5,6,7,8-tetrahydrofolate. It carries out the reaction IMP + H2O = 5-formamido-1-(5-phospho-D-ribosyl)imidazole-4-carboxamide. The protein operates within purine metabolism; IMP biosynthesis via de novo pathway; 5-formamido-1-(5-phospho-D-ribosyl)imidazole-4-carboxamide from 5-amino-1-(5-phospho-D-ribosyl)imidazole-4-carboxamide (10-formyl THF route): step 1/1. Its pathway is purine metabolism; IMP biosynthesis via de novo pathway; IMP from 5-formamido-1-(5-phospho-D-ribosyl)imidazole-4-carboxamide: step 1/1. The sequence is that of Bifunctional purine biosynthesis protein PurH from Salmonella agona (strain SL483).